The following is a 112-amino-acid chain: Putative pterin-4-alpha-carbinolamine dehydratase (112 aa).

The protein belongs to the pterin-4-alpha-carbinolamine dehydratase family.

It catalyses the reaction (4aS,6R)-4a-hydroxy-L-erythro-5,6,7,8-tetrahydrobiopterin = (6R)-L-erythro-6,7-dihydrobiopterin + H2O. The chain is Putative pterin-4-alpha-carbinolamine dehydratase from Hahella chejuensis (strain KCTC 2396).